We begin with the raw amino-acid sequence, 494 residues long: UPF0371 protein STER_1332 (494 aa).

Belongs to the UPF0371 family.

In Streptococcus thermophilus (strain ATCC BAA-491 / LMD-9), this protein is UPF0371 protein STER_1332.